The primary structure comprises 622 residues: 1-deoxy-D-xylulose-5-phosphate synthase (622 aa).

Thiamine diphosphate is bound by residues histidine 80 and 121 to 123 (GHS). Aspartate 152 is a binding site for Mg(2+). Thiamine diphosphate-binding positions include 153–154 (GA), asparagine 181, tyrosine 288, and glutamate 370. Residue asparagine 181 participates in Mg(2+) binding.

This sequence belongs to the transketolase family. DXPS subfamily. Homodimer. The cofactor is Mg(2+). Requires thiamine diphosphate as cofactor.

It carries out the reaction D-glyceraldehyde 3-phosphate + pyruvate + H(+) = 1-deoxy-D-xylulose 5-phosphate + CO2. It participates in metabolic intermediate biosynthesis; 1-deoxy-D-xylulose 5-phosphate biosynthesis; 1-deoxy-D-xylulose 5-phosphate from D-glyceraldehyde 3-phosphate and pyruvate: step 1/1. Its function is as follows. Catalyzes the acyloin condensation reaction between C atoms 2 and 3 of pyruvate and glyceraldehyde 3-phosphate to yield 1-deoxy-D-xylulose-5-phosphate (DXP). This is 1-deoxy-D-xylulose-5-phosphate synthase from Shewanella loihica (strain ATCC BAA-1088 / PV-4).